Here is a 436-residue protein sequence, read N- to C-terminus: Na(+)/H(+) antiporter NhaA (436 aa).

11 consecutive transmembrane segments (helical) span residues 14–34, 59–79, 95–115, 125–145, 152–172, 176–196, 214–234, 300–320, 336–356, 374–394, and 407–427; these read AGGIVLIAATILTLILSNSTW, LHHWINDGLMAVFFFVVGLEL, ALPVIAALGGMLAPALIYHQF, WGIPMATDIAFAIGILVLLAW, IIFLTALAIADDLGAVLVIAI, PALHIKALMIAALLLLALLLF, FWYFVILSGIHATVAGIFLAF, AIQPWVTFAVLPVFALANAGI, IGTCLGLVLGKFLGIGLSSWL, LLGAAWLGGIGFTMSLFIGQL, and LGILLASLIAASIGLLWLFQV.

This sequence belongs to the NhaA Na(+)/H(+) (TC 2.A.33) antiporter family.

The protein resides in the cell inner membrane. The enzyme catalyses Na(+)(in) + 2 H(+)(out) = Na(+)(out) + 2 H(+)(in). Na(+)/H(+) antiporter that extrudes sodium in exchange for external protons. In Acidithiobacillus ferrooxidans (strain ATCC 23270 / DSM 14882 / CIP 104768 / NCIMB 8455) (Ferrobacillus ferrooxidans (strain ATCC 23270)), this protein is Na(+)/H(+) antiporter NhaA.